The following is a 338-amino-acid chain: MTRLVTPDITEDDLIESSLRPRALDDYIGQEKAKGNLRVFIDAARKRGEALDHVLLYGPPGLGKTTLANIIACEMGVNIKSTSGPVIERPGDLAAILTNLEPHDVLFIDEIHRLSHVVEEILYPAMEDYQLDIIIGQGPSARTIKLDLPKFTLVGATTRAGLLSSPLRDRFGVISRLEFYTDDELTTIVTRSARILNIGIEPEGGRELARRSRGTPRIANRLLRRVRDFAQVRADGVITAPVVDESLKLLEIDEKGFDHMDRTIMLTIIDKFGGGPVGLDTIAAAIGEERDTIEDVYEPFLIQHGFINRTPRGRVATRAAYEHFGRIAPPSSSQGNLF.

The large ATPase domain (RuvB-L) stretch occupies residues 1-180; that stretch reads MTRLVTPDIT…FGVISRLEFY (180 aa). Residues Leu-19, Arg-20, Gly-61, Lys-64, Thr-65, Thr-66, 127–129, Arg-170, Tyr-180, and Arg-217 contribute to the ATP site; that span reads EDY. A Mg(2+)-binding site is contributed by Thr-65. Positions 181–251 are small ATPAse domain (RuvB-S); the sequence is TDDELTTIVT…VVDESLKLLE (71 aa). The tract at residues 254–338 is head domain (RuvB-H); that stretch reads EKGFDHMDRT…PPSSSQGNLF (85 aa). Arg-290, Arg-309, and Arg-314 together coordinate DNA.

This sequence belongs to the RuvB family. As to quaternary structure, homohexamer. Forms an RuvA(8)-RuvB(12)-Holliday junction (HJ) complex. HJ DNA is sandwiched between 2 RuvA tetramers; dsDNA enters through RuvA and exits via RuvB. An RuvB hexamer assembles on each DNA strand where it exits the tetramer. Each RuvB hexamer is contacted by two RuvA subunits (via domain III) on 2 adjacent RuvB subunits; this complex drives branch migration. In the full resolvosome a probable DNA-RuvA(4)-RuvB(12)-RuvC(2) complex forms which resolves the HJ.

Its subcellular location is the cytoplasm. It carries out the reaction ATP + H2O = ADP + phosphate + H(+). Its function is as follows. The RuvA-RuvB-RuvC complex processes Holliday junction (HJ) DNA during genetic recombination and DNA repair, while the RuvA-RuvB complex plays an important role in the rescue of blocked DNA replication forks via replication fork reversal (RFR). RuvA specifically binds to HJ cruciform DNA, conferring on it an open structure. The RuvB hexamer acts as an ATP-dependent pump, pulling dsDNA into and through the RuvAB complex. RuvB forms 2 homohexamers on either side of HJ DNA bound by 1 or 2 RuvA tetramers; 4 subunits per hexamer contact DNA at a time. Coordinated motions by a converter formed by DNA-disengaged RuvB subunits stimulates ATP hydrolysis and nucleotide exchange. Immobilization of the converter enables RuvB to convert the ATP-contained energy into a lever motion, pulling 2 nucleotides of DNA out of the RuvA tetramer per ATP hydrolyzed, thus driving DNA branch migration. The RuvB motors rotate together with the DNA substrate, which together with the progressing nucleotide cycle form the mechanistic basis for DNA recombination by continuous HJ branch migration. Branch migration allows RuvC to scan DNA until it finds its consensus sequence, where it cleaves and resolves cruciform DNA. In Geobacter metallireducens (strain ATCC 53774 / DSM 7210 / GS-15), this protein is Holliday junction branch migration complex subunit RuvB.